Reading from the N-terminus, the 324-residue chain is Pyruvate synthase subunit PorB (324 aa).

[4Fe-4S] cluster is bound by residues Cys26, Cys29, and Cys57. The tract at residues 150 to 172 (TGNQRSGSTPPGSDTTTAPVGKK) is disordered. The span at 155 to 166 (SGSTPPGSDTTT) shows a compositional bias: low complexity. Cys228 contacts [4Fe-4S] cluster.

Heterotetramer of one alpha, one beta, one delta and one gamma chain. It depends on [4Fe-4S] cluster as a cofactor.

It catalyses the reaction 2 oxidized [2Fe-2S]-[ferredoxin] + pyruvate + CoA = 2 reduced [2Fe-2S]-[ferredoxin] + acetyl-CoA + CO2 + H(+). The polypeptide is Pyruvate synthase subunit PorB (porB) (Thermotoga maritima (strain ATCC 43589 / DSM 3109 / JCM 10099 / NBRC 100826 / MSB8)).